The primary structure comprises 369 residues: Cyclic AMP receptor-like protein A (369 aa).

The Extracellular segment spans residues 1–4; it reads MIQI. The chain crosses the membrane as a helical span at residues 5-22; sequence LLSTFISFIIIIVSSNDI. At 23 to 72 the chain is on the cytoplasmic side; that stretch reads RSGENDNFNNNKMINNFLTTITTNDTIIIKETESPNDYDFSKEQIESLDK. The helical transmembrane segment at 73-93 threads the bilayer; that stretch reads IVYFSSTMGIVGALFIIVSFF. Residues 94 to 100 lie on the Extracellular side of the membrane; sequence LFKAART. Residues 101–121 traverse the membrane as a helical segment; it reads FATKMIFFLSLSDLFAAIFYL. Over 122–146 the chain is Cytoplasmic; sequence PYYRDSDIMCNLQGMGLVFFLSSSY. A helical membrane pass occupies residues 147–167; that stretch reads LWTMCISISLFMVFFTTIFEL. Residues 168 to 173 lie on the Extracellular side of the membrane; that stretch reads NHWFKY. Residues 174 to 194 traverse the membrane as a helical segment; the sequence is FHFICWGIPLFTAIISLIFHA. Residues 195-212 are Cytoplasmic-facing; the sequence is YGKTGSWCFISDPTSIFR. Residues 213 to 233 form a helical membrane-spanning segment; that stretch reads LLYYLPLIVVFFINLVVFIAI. At 234-247 the chain is on the extracellular side; it reads RWKISQHSNSLVSR. The helical transmembrane segment at 248-268 threads the bilayer; sequence VNIIVSFYLIAFSLSQLPTII. The Cytoplasmic portion of the chain corresponds to 269–369; that stretch reads NSIQNFSDPD…KLIIDDYNRV (101 aa).

The protein belongs to the G-protein coupled receptor 5 family.

Its subcellular location is the membrane. Receptor for cAMP which may play a role in prestalk cell differentiation. May act as a negative regulator of cell growth. The protein is Cyclic AMP receptor-like protein A (crlA) of Dictyostelium discoideum (Social amoeba).